A 780-amino-acid polypeptide reads, in one-letter code: 5-methyltetrahydropteroyltriglutamate--homocysteine methyltransferase (780 aa).

5-methyltetrahydropteroyltri-L-glutamate is bound by residues 15-18 (RELK) and lysine 114. L-homocysteine is bound by residues 457–459 (IGS) and glutamate 510. L-methionine-binding positions include 457–459 (IGS) and glutamate 510. Residues 541-542 (RC) and tryptophan 587 contribute to the 5-methyltetrahydropteroyltri-L-glutamate site. Position 625 (aspartate 625) interacts with L-homocysteine. L-methionine is bound at residue aspartate 625. Glutamate 631 contributes to the 5-methyltetrahydropteroyltri-L-glutamate binding site. Residues histidine 667, cysteine 669, and glutamate 691 each coordinate Zn(2+). Histidine 720 functions as the Proton donor in the catalytic mechanism. Cysteine 752 contacts Zn(2+).

The protein belongs to the vitamin-B12 independent methionine synthase family. It depends on Zn(2+) as a cofactor.

The enzyme catalyses 5-methyltetrahydropteroyltri-L-glutamate + L-homocysteine = tetrahydropteroyltri-L-glutamate + L-methionine. The protein operates within amino-acid biosynthesis; L-methionine biosynthesis via de novo pathway; L-methionine from L-homocysteine (MetE route): step 1/1. Functionally, catalyzes the transfer of a methyl group from 5-methyltetrahydrofolate to homocysteine resulting in methionine formation. In Nitratidesulfovibrio vulgaris (strain DSM 19637 / Miyazaki F) (Desulfovibrio vulgaris), this protein is 5-methyltetrahydropteroyltriglutamate--homocysteine methyltransferase.